Reading from the N-terminus, the 718-residue chain is Catalase (718 aa).

Residues His-103 and Asn-176 contribute to the active site. Tyr-390 provides a ligand contact to heme.

The protein belongs to the catalase family. It depends on heme as a cofactor.

It is found in the peroxisome matrix. The enzyme catalyses 2 H2O2 = O2 + 2 H2O. In terms of biological role, catalyzes the degradation of hydrogen peroxide (H(2)O(2)) generated by peroxisomal oxidases to water and oxygen, thereby protecting cells from the toxic effects of hydrogen peroxide. This is Catalase (CAT1) from Blumeria hordei (Barley powdery mildew).